The following is a 225-amino-acid chain: Uracil-DNA glycosylase (225 aa).

Asp65 (proton acceptor) is an active-site residue.

Belongs to the uracil-DNA glycosylase (UDG) superfamily. UNG family.

It is found in the cytoplasm. The enzyme catalyses Hydrolyzes single-stranded DNA or mismatched double-stranded DNA and polynucleotides, releasing free uracil.. Functionally, excises uracil residues from the DNA which can arise as a result of misincorporation of dUMP residues by DNA polymerase or due to deamination of cytosine. The sequence is that of Uracil-DNA glycosylase from Bacillus cereus (strain AH187).